The chain runs to 234 residues: Transcriptional activator protein TraR (234 aa).

An HTH luxR-type domain is found at 167-232 (TAEDAAWLDP…HLTALAIKRK (66 aa)). Residues 191–210 (MEEIADVEEVKYNSVRVKLR) constitute a DNA-binding region (H-T-H motif).

The protein belongs to the autoinducer-regulated transcriptional regulatory protein family.

Its function is as follows. Positive regulation of conjugal transfer of Ti plasmids. The polypeptide is Transcriptional activator protein TraR (traR) (Agrobacterium vitis (Rhizobium vitis)).